The following is a 1324-amino-acid chain: Mediator of RNA polymerase II transcription subunit 13 (1324 aa).

Disordered regions lie at residues 296 to 346 (ESGV…PPEA), 386 to 455 (FFDD…ATTA), 535 to 590 (GRFF…EPEI), 607 to 631 (HDDK…SNNS), 694 to 816 (KGGQ…VPSA), and 1151 to 1198 (TGSD…PDIY). Over residues 298–331 (GVNTNESTAAQPQPAQNGTNSMAPAAGTTNATTQ) the composition is skewed to polar residues. The segment covering 398-407 (DGDNDNGNDN) has biased composition (acidic residues). The span at 408 to 442 (DNDKADAMDVDVKEEAKKEEMIKKETKEEVPVKEE) shows a compositional bias: basic and acidic residues. Residues 546–566 (DNEGSSDNTGDSSDSGDGSES) are compositionally biased toward low complexity. Composition is skewed to basic and acidic residues over residues 567 to 578 (VPRDVKRQKVDE) and 607 to 617 (HDDKPAKKIDS). Low complexity-rich tracts occupy residues 618–631 (SNDT…SNNS) and 724–743 (SNAS…QMGA). The span at 750–784 (LSPSRGATPQPEGSSPETRPSNWTPGITSQVNSAA) shows a compositional bias: polar residues. Low complexity-rich tracts occupy residues 785 to 816 (SSPV…VPSA) and 1172 to 1184 (TGAA…GSAP).

The protein belongs to the Mediator complex subunit 13 family. Component of the SRB8-11 complex, which itself associates with the Mediator complex.

It localises to the nucleus. Functionally, component of the SRB8-11 complex. The SRB8-11 complex is a regulatory module of the Mediator complex which is itself involved in regulation of basal and activated RNA polymerase II-dependent transcription. The SRB8-11 complex may be involved in the transcriptional repression of a subset of genes regulated by Mediator. It may inhibit the association of the Mediator complex with RNA polymerase II to form the holoenzyme complex. The sequence is that of Mediator of RNA polymerase II transcription subunit 13 (SSN2) from Yarrowia lipolytica (strain CLIB 122 / E 150) (Yeast).